We begin with the raw amino-acid sequence, 342 residues long: tRNA (guanine(26)-N(2))-dimethyltransferase (342 aa).

Positions 1 to 336 (MRITEGSAVI…CPYAEVSEIL (336 aa)) constitute a Trm1 methyltransferase domain. S-adenosyl-L-methionine is bound by residues Arg35, Arg60, and Glu76.

This sequence belongs to the class I-like SAM-binding methyltransferase superfamily. Trm1 family.

The catalysed reaction is guanosine(26) in tRNA + 2 S-adenosyl-L-methionine = N(2)-dimethylguanosine(26) in tRNA + 2 S-adenosyl-L-homocysteine + 2 H(+). Its function is as follows. Dimethylates a single guanine residue at position 26 of a number of tRNAs using S-adenosyl-L-methionine as donor of the methyl groups. The chain is tRNA (guanine(26)-N(2))-dimethyltransferase from Thermoplasma volcanium (strain ATCC 51530 / DSM 4299 / JCM 9571 / NBRC 15438 / GSS1).